A 411-amino-acid chain; its full sequence is Ferrochelatase, mitochondrial (411 aa).

The N-terminal 41 residues, 1 to 41 (MAAFRAAHRLLGHILRNESSAGLVTQRWSSSAAVASVPKSS), are a transit peptide targeting the mitochondrion. The disordered stretch occupies residues 34 to 55 (VASVPKSSDPKPHAQPDKRKPK). Residues 41–51 (SDPKPHAQPDK) are compositionally biased toward basic and acidic residues. Protoporphyrin IX is bound by residues R102, Y110, and S117. C183 serves as a coordination point for [2Fe-2S] cluster. Active-site residues include H217 and D370. The [2Fe-2S] cluster site is built by C390, C393, and C398.

Belongs to the ferrochelatase family. Homodimer. Homotetramer. The cofactor is [2Fe-2S] cluster.

The protein localises to the mitochondrion inner membrane. It carries out the reaction heme b + 2 H(+) = protoporphyrin IX + Fe(2+). Its pathway is porphyrin-containing compound metabolism; protoheme biosynthesis; protoheme from protoporphyrin-IX: step 1/1. Functionally, catalyzes the ferrous insertion into protoporphyrin IX. The chain is Ferrochelatase, mitochondrial from Xenopus laevis (African clawed frog).